We begin with the raw amino-acid sequence, 295 residues long: Ubiquinol-cytochrome c reductase complex assembly factor 1 (295 aa).

The protein belongs to the CBP3 family. As to quaternary structure, interacts with UQCC2. Interacts with UQCC3. Forms a complex, named COMB/coordinator of mitochondrial CYTB biogenesis, composed of UQCC1, UQCC2, UQCC4, UQCC5 and UQCC6; stabilizes nascent cytochrome b/MT-CYB and promotes its membrane insertion. Forms a complex, named COMA, composed of UQCC1, UQCC2 and UQCC4; activates MT-CYB translation. Forms a complex, named COMC, composed of UQCC1, UQCC2; UQCC3 and UQCC4; mediates MT-CYB hemylation and association with the first nuclear-encoded CIII subunit UQCRQ. In the brain it is restricted to the olfactory bulb, the hippocampus, the piriform cortex and the Purkinje cells.

The protein localises to the mitochondrion inner membrane. It localises to the cytoplasmic vesicle. Functionally, required for the assembly of the ubiquinol-cytochrome c reductase complex (mitochondrial respiratory chain complex III or cytochrome b-c1 complex). Involved in cytochrome b translation and/or stability. The polypeptide is Ubiquinol-cytochrome c reductase complex assembly factor 1 (Uqcc1) (Mus musculus (Mouse)).